The primary structure comprises 99 residues: MSPISRDEVLHLARLTRLVLTDTELASFSSQLDVILAHVSQIQAVDVTGVEPTDNPLKYVNITRPDETVPCLTQQQALAEAPEAIYGRFVVPQILGDNK.

The protein belongs to the GatC family. In terms of assembly, heterotrimer of A, B and C subunits.

The catalysed reaction is L-glutamyl-tRNA(Gln) + L-glutamine + ATP + H2O = L-glutaminyl-tRNA(Gln) + L-glutamate + ADP + phosphate + H(+). It carries out the reaction L-aspartyl-tRNA(Asn) + L-glutamine + ATP + H2O = L-asparaginyl-tRNA(Asn) + L-glutamate + ADP + phosphate + 2 H(+). Allows the formation of correctly charged Asn-tRNA(Asn) or Gln-tRNA(Gln) through the transamidation of misacylated Asp-tRNA(Asn) or Glu-tRNA(Gln) in organisms which lack either or both of asparaginyl-tRNA or glutaminyl-tRNA synthetases. The reaction takes place in the presence of glutamine and ATP through an activated phospho-Asp-tRNA(Asn) or phospho-Glu-tRNA(Gln). The polypeptide is Aspartyl/glutamyl-tRNA(Asn/Gln) amidotransferase subunit C (Mycobacterium leprae (strain Br4923)).